The sequence spans 723 residues: Polyribonucleotide nucleotidyltransferase (723 aa).

Residues D497 and D503 each contribute to the Mg(2+) site. The KH domain occupies 564-623 (PRLLSFRIDPELIGTVIGPGGRTIKGITERTNTKIDIEDGGIVTIASHDGAAAEAAQRII). The region spanning 633 to 701 (GEVFTGTITR…NRGRINLTLR (69 aa)) is the S1 motif domain. The tract at residues 701 to 723 (RGVPQNGEETQSEPAPTPVAPLN) is disordered.

This sequence belongs to the polyribonucleotide nucleotidyltransferase family. The cofactor is Mg(2+).

It localises to the cytoplasm. The enzyme catalyses RNA(n+1) + phosphate = RNA(n) + a ribonucleoside 5'-diphosphate. Functionally, involved in mRNA degradation. Catalyzes the phosphorolysis of single-stranded polyribonucleotides processively in the 3'- to 5'-direction. In Prochlorococcus marinus (strain MIT 9313), this protein is Polyribonucleotide nucleotidyltransferase.